Reading from the N-terminus, the 110-residue chain is Late cornified envelope-like proline-rich protein 1 (110 aa).

The tract at residues 1-24 (MSSDDKNKPGEPKNEPKQCDPGCE) is disordered.

This sequence belongs to the cornifin (SPRR) family.

This Bos taurus (Bovine) protein is Late cornified envelope-like proline-rich protein 1 (LELP1).